A 280-amino-acid polypeptide reads, in one-letter code: UPF0276 protein NMA0228 (280 aa).

Belongs to the UPF0276 family.

The polypeptide is UPF0276 protein NMA0228 (Neisseria meningitidis serogroup A / serotype 4A (strain DSM 15465 / Z2491)).